We begin with the raw amino-acid sequence, 92 residues long: Ezrin (92 aa).

An FERM domain is found at Gln1–Arg72. The residue at position 15 (Lys15) is an N6-acetyllysine. The tract at residues Glu42–Lys92 is interaction with SCYL3.

Interacts with PALS1 and NHERF2. Found in a complex with EZR, PODXL and NHERF2. Interacts with MCC, PLEKHG6, PODXL, SCYL3/PACE1, NHERF1 and TMEM8B. Interacts (when phosphorylated) with FES/FPS. Interacts with dimeric S100P, the interaction may be activating through unmasking of F-actin binding sites. Identified in complexes that contain VIM, EZR, AHNAK, BFSP1, BFSP2, ANK2, PLEC, PRX and spectrin. Detected in a complex composed of at least EZR, AHNAK, PPL and PRX. Interacts with PDPN (via cytoplasmic domain); activates RHOA and promotes epithelial-mesenchymal transition. Interacts with SPN/CD43 cytoplasmic tail, CD44 and ICAM2. Interacts with CLIC5; may work together in a complex which also includes RDX and MYO6 to stabilize linkages between the plasma membrane and subjacent actin cytoskeleton at the base of stereocilia. Post-translationally, phosphorylated by tyrosine-protein kinases. Phosphorylation by ROCK2 suppresses the head-to-tail association of the N-terminal and C-terminal halves resulting in an opened conformation which is capable of actin and membrane-binding. In terms of processing, S-nitrosylation is induced by interferon-gamma and oxidatively-modified low-densitity lipoprotein (LDL(ox)) possibly implicating the iNOS-S100A8/9 transnitrosylase complex.

It localises to the apical cell membrane. The protein localises to the cell projection. The protein resides in the microvillus membrane. Its subcellular location is the ruffle membrane. It is found in the cytoplasm. It localises to the cell cortex. The protein localises to the cytoskeleton. The protein resides in the microvillus. Its activity is regulated as follows. A head-to-tail association, of the N-terminal and C-terminal halves results in a closed conformation (inactive form) which is incapable of actin or membrane-binding. Probably involved in connections of major cytoskeletal structures to the plasma membrane. In epithelial cells, required for the formation of microvilli and membrane ruffles on the apical pole. Along with PLEKHG6, required for normal macropinocytosis. This Mesocricetus auratus (Golden hamster) protein is Ezrin.